A 487-amino-acid chain; its full sequence is Glutamyl-tRNA(Gln) amidotransferase subunit A (487 aa).

Active-site charge relay system residues include Lys-80 and Ser-155. Ser-179 serves as the catalytic Acyl-ester intermediate.

Belongs to the amidase family. GatA subfamily. Heterotrimer of A, B and C subunits.

The catalysed reaction is L-glutamyl-tRNA(Gln) + L-glutamine + ATP + H2O = L-glutaminyl-tRNA(Gln) + L-glutamate + ADP + phosphate + H(+). Allows the formation of correctly charged Gln-tRNA(Gln) through the transamidation of misacylated Glu-tRNA(Gln) in organisms which lack glutaminyl-tRNA synthetase. The reaction takes place in the presence of glutamine and ATP through an activated gamma-phospho-Glu-tRNA(Gln). The sequence is that of Glutamyl-tRNA(Gln) amidotransferase subunit A from Leptospira interrogans serogroup Icterohaemorrhagiae serovar copenhageni (strain Fiocruz L1-130).